Reading from the N-terminus, the 287-residue chain is Elongation factor Ts (287 aa).

The interval 80 to 83 (TDFL) is involved in Mg(2+) ion dislocation from EF-Tu.

It belongs to the EF-Ts family.

The protein resides in the cytoplasm. Functionally, associates with the EF-Tu.GDP complex and induces the exchange of GDP to GTP. It remains bound to the aminoacyl-tRNA.EF-Tu.GTP complex up to the GTP hydrolysis stage on the ribosome. This Pseudomonas fluorescens (strain SBW25) protein is Elongation factor Ts.